The sequence spans 207 residues: Ion-translocating oxidoreductase complex subunit G (207 aa).

Residues 11-31 form a helical membrane-spanning segment; it reads GILLGFIALLCTIISAGIFFL. Thr175 bears the FMN phosphoryl threonine mark.

It belongs to the RnfG family. The complex is composed of six subunits: RnfA, RnfB, RnfC, RnfD, RnfE and RnfG. FMN is required as a cofactor.

It is found in the cell inner membrane. Its function is as follows. Part of a membrane-bound complex that couples electron transfer with translocation of ions across the membrane. This is Ion-translocating oxidoreductase complex subunit G from Haemophilus influenzae (strain ATCC 51907 / DSM 11121 / KW20 / Rd).